Here is a 101-residue protein sequence, read N- to C-terminus: RNA silencing suppressor (101 aa).

A basic region spans residues 47–50 (RRRR). Residues 57–78 (CPRCARVSPGFYFTTRCDGKTC) form a C4-type zinc finger.

The protein belongs to the carlaviruses nucleic acid-binding protein family.

In terms of biological role, suppressor of viral-induced RNA silencing. The potential mechanism of action is based on sequestering siRNAs. This Dianthus caryophyllus (Carnation) protein is RNA silencing suppressor (TUC).